An 87-amino-acid polypeptide reads, in one-letter code: U14-lycotoxin-Ls1a (87 aa).

A signal peptide spans 1–20 (MNSKVFAALLLLALSTCVLS). Positions 21-66 (EKYCPTPRNTSCKKMNIRNNCCRDSDCTSNAFCCAEPCGNFCHKAS) constitute a WAP domain. Cystine bridges form between cysteine 24–cysteine 54, cysteine 32–cysteine 58, cysteine 41–cysteine 53, cysteine 42–cysteine 80, and cysteine 47–cysteine 62.

Belongs to the venom protein 11 family. 01 (wap-1) subfamily. Contains 5 disulfide bonds. As to expression, expressed by the venom gland.

The protein localises to the secreted. Its function is as follows. Has antibacterial activity. In Lycosa singoriensis (Wolf spider), this protein is U14-lycotoxin-Ls1a.